A 344-amino-acid polypeptide reads, in one-letter code: Dihydroorotase (344 aa).

Residues H13 and H15 each coordinate Zn(2+). Substrate-binding positions include 15 to 17 (HLR) and N41. Residues K99, H136, and H174 each contribute to the Zn(2+) site. The residue at position 99 (K99) is an N6-carboxylysine. Residue H136 participates in substrate binding. L219 serves as a coordination point for substrate. Zn(2+) is bound at residue D247. The active site involves D247. Substrate is bound by residues H251 and A263.

The protein belongs to the metallo-dependent hydrolases superfamily. DHOase family. Class II DHOase subfamily. In terms of assembly, homodimer. It depends on Zn(2+) as a cofactor.

It carries out the reaction (S)-dihydroorotate + H2O = N-carbamoyl-L-aspartate + H(+). Its pathway is pyrimidine metabolism; UMP biosynthesis via de novo pathway; (S)-dihydroorotate from bicarbonate: step 3/3. Catalyzes the reversible cyclization of carbamoyl aspartate to dihydroorotate. The polypeptide is Dihydroorotase (Idiomarina loihiensis (strain ATCC BAA-735 / DSM 15497 / L2-TR)).